Reading from the N-terminus, the 498-residue chain is Protein disulfide-isomerase (498 aa).

An N-terminal signal peptide occupies residues 1–23 (MASFRGSIWYCIFVLSLIAVAIS). 2 Thioredoxin domains span residues 24 to 143 (AAES…KQSG) and 339 to 484 (YLKA…KNRD). Asn41 is a glycosylation site (N-linked (GlcNAc...) asparagine). Catalysis depends on nucleophile residues Cys61, Cys64, Cys406, and Cys409. Cystine bridges form between Cys61–Cys64 and Cys406–Cys409. Residues 495 to 498 (KDEL) carry the Prevents secretion from ER motif.

It belongs to the protein disulfide isomerase family.

It is found in the endoplasmic reticulum lumen. It catalyses the reaction Catalyzes the rearrangement of -S-S- bonds in proteins.. Functionally, participates in the folding of proteins containing disulfide bonds, may be involved in glycosylation, prolyl hydroxylation and triglyceride transfer. This is Protein disulfide-isomerase from Ricinus communis (Castor bean).